A 62-amino-acid polypeptide reads, in one-letter code: Large ribosomal subunit protein bL28 (62 aa).

The protein belongs to the bacterial ribosomal protein bL28 family.

This is Large ribosomal subunit protein bL28 from Helicobacter acinonychis (strain Sheeba).